Reading from the N-terminus, the 209-residue chain is Probable nicotinate-nucleotide adenylyltransferase (209 aa).

Belongs to the NadD family.

It carries out the reaction nicotinate beta-D-ribonucleotide + ATP + H(+) = deamido-NAD(+) + diphosphate. It participates in cofactor biosynthesis; NAD(+) biosynthesis; deamido-NAD(+) from nicotinate D-ribonucleotide: step 1/1. In terms of biological role, catalyzes the reversible adenylation of nicotinate mononucleotide (NaMN) to nicotinic acid adenine dinucleotide (NaAD). The polypeptide is Probable nicotinate-nucleotide adenylyltransferase (Streptococcus pneumoniae serotype 4 (strain ATCC BAA-334 / TIGR4)).